The chain runs to 90 residues: MKERWRFLIEGSVQGVGFRNSCRRRALDLGLCGWVRNLKDGVVEIQAEGDELALNELRLWCERGPSAATVKRVLLSKIPVTGNDWFDVRT.

In terms of domain architecture, Acylphosphatase-like spans 4–90; it reads RWRFLIEGSV…TGNDWFDVRT (87 aa). Residues Arg19 and Asn37 contribute to the active site.

It belongs to the acylphosphatase family.

The enzyme catalyses an acyl phosphate + H2O = a carboxylate + phosphate + H(+). The chain is Acylphosphatase (acyP) from Synechococcus sp. (strain CC9311).